We begin with the raw amino-acid sequence, 832 residues long: AP-1 complex subunit gamma-1 (832 aa).

The GAE domain maps to 733-832 (LNVYASLLSA…QFDHKFDETL (100 aa)).

Adapter protein complex 1 (AP-1) is a heterotetramer composed of two large adaptins (gamma-type subunit APL4 and beta-type subunit APL2), a medium adaptin (mu-type subunit APM1) and a small adaptin (sigma-type subunit APS1). AP-1 interacts with clathrin. Also a component of the AP-1R complex composed of at least APM2, APL4 and APS1.

The protein resides in the cytoplasm. It localises to the golgi apparatus membrane. It is found in the cytoplasmic vesicle. Its subcellular location is the clathrin-coated vesicle membrane. Its function is as follows. Adaptins are components of the adapter complexes which link clathrin to receptors in coated vesicles. Clathrin-associated protein complexes are believed to interact with the cytoplasmic tails of membrane proteins, leading to their selection and concentration. The AP-1 complex interacts directly with clathrin. Component of the AP-1-related (AP-1R) complex, an adapter protein complex that mediates sorting of cargo SNARE SNC1. In contrast to the APM1-containing AP-1 complex, AP-1R is incapable of sorting CHS3. The polypeptide is AP-1 complex subunit gamma-1 (APL4) (Saccharomyces cerevisiae (strain ATCC 204508 / S288c) (Baker's yeast)).